A 156-amino-acid polypeptide reads, in one-letter code: Small ribosomal subunit protein uS7 (156 aa).

This sequence belongs to the universal ribosomal protein uS7 family. Part of the 30S ribosomal subunit. Contacts proteins S9 and S11.

In terms of biological role, one of the primary rRNA binding proteins, it binds directly to 16S rRNA where it nucleates assembly of the head domain of the 30S subunit. Is located at the subunit interface close to the decoding center, probably blocks exit of the E-site tRNA. This Deinococcus geothermalis (strain DSM 11300 / CIP 105573 / AG-3a) protein is Small ribosomal subunit protein uS7.